Reading from the N-terminus, the 483-residue chain is Cysteine--tRNA ligase (483 aa).

Zn(2+) is bound at residue Cys-29. Positions 31 to 41 match the 'HIGH' region motif; the sequence is ITVYDYCHLGH. Zn(2+)-binding residues include Cys-215, His-240, and Glu-244. The short motif at 272–276 is the 'KMSKS' region element; the sequence is KMSKS. Lys-275 contributes to the ATP binding site.

Belongs to the class-I aminoacyl-tRNA synthetase family. In terms of assembly, monomer. Zn(2+) is required as a cofactor.

Its subcellular location is the cytoplasm. It catalyses the reaction tRNA(Cys) + L-cysteine + ATP = L-cysteinyl-tRNA(Cys) + AMP + diphosphate. The polypeptide is Cysteine--tRNA ligase (cysS) (Synechocystis sp. (strain ATCC 27184 / PCC 6803 / Kazusa)).